The chain runs to 473 residues: Cysteine--tRNA ligase (473 aa).

Residue cysteine 28 coordinates Zn(2+). A 'HIGH' region motif is present at residues 30 to 40; it reads MTVYDYCHLGH. 3 residues coordinate Zn(2+): cysteine 209, histidine 234, and glutamate 238. The 'KMSKS' region signature appears at 282–286; sequence KMSKS. Lysine 285 is an ATP binding site.

Belongs to the class-I aminoacyl-tRNA synthetase family. In terms of assembly, monomer. Zn(2+) is required as a cofactor.

It localises to the cytoplasm. It catalyses the reaction tRNA(Cys) + L-cysteine + ATP = L-cysteinyl-tRNA(Cys) + AMP + diphosphate. In Neisseria meningitidis serogroup B (strain ATCC BAA-335 / MC58), this protein is Cysteine--tRNA ligase.